Consider the following 485-residue polypeptide: Glutamyl-tRNA(Gln) amidotransferase subunit A (485 aa).

Residues Lys-79 and Ser-154 each act as charge relay system in the active site. Ser-178 acts as the Acyl-ester intermediate in catalysis.

This sequence belongs to the amidase family. GatA subfamily. In terms of assembly, heterotrimer of A, B and C subunits.

It catalyses the reaction L-glutamyl-tRNA(Gln) + L-glutamine + ATP + H2O = L-glutaminyl-tRNA(Gln) + L-glutamate + ADP + phosphate + H(+). Its function is as follows. Allows the formation of correctly charged Gln-tRNA(Gln) through the transamidation of misacylated Glu-tRNA(Gln) in organisms which lack glutaminyl-tRNA synthetase. The reaction takes place in the presence of glutamine and ATP through an activated gamma-phospho-Glu-tRNA(Gln). This Staphylococcus aureus (strain bovine RF122 / ET3-1) protein is Glutamyl-tRNA(Gln) amidotransferase subunit A.